We begin with the raw amino-acid sequence, 75 residues long: Small ribosomal subunit protein bS18c (75 aa).

The protein belongs to the bacterial ribosomal protein bS18 family. In terms of assembly, part of the 30S ribosomal subunit.

It is found in the plastid. It localises to the chloroplast. The polypeptide is Small ribosomal subunit protein bS18c (Adiantum capillus-veneris (Maidenhair fern)).